A 90-amino-acid chain; its full sequence is ATP synthase subunit e, mitochondrial (90 aa).

Ser-2 is modified (N-acetylserine). A helical membrane pass occupies residues 7–23 (VLRWSALGAGVVYGFVH).

In terms of assembly, F-type ATP synthases have 2 components, the catalytic core F(1) and the membrane-embedded component F(0), linked together by a central stalk and a peripheral stalk. The central stalk, also called rotor shaft, is often seen as part of F(1). The peripheral stalk is seen as part of F(0). F(0) contains the membrane channel next to the rotor. F-type ATP synthases form dimers but each monomer functions independently in ATP generation. The dimer consists of 17 different polypeptides: ATP1 (subunit alpha, 3 molecules per monomer, part of F(1)), ATP2 (subunit beta, 3 copies per monomer, part of F(1)), ATP3 (subunit gamma, part of the central stalk), ATP4 (subunit b, part of the peripheral stalk), ATP5/OSCP (subunit 5/OSCP, part of the peripheral stalk), ATP6 (subunit a, part of the peripheral stalk), ATP7 (subunit d, part of the peripheral stalk), ATP8 (subunit 8, part of the peripheral stalk), OLI1 (subunit c, part of the rotor, 10 molecules per monomer), ATP14 (subunit h, part of the peripheral stalk), ATP15 (subunit epsilon, part of the central stalk), ATP16 (subunit delta, part of the central stalk), ATP17 (subunit f, part of the peripheral stalk), ATP18 (subunit i/j, part of the peripheral stalk), ATP19 (subunit k, dimer-specific, at interface between monomers), ATP20 (subunit g, at interface between monomers), TIM11 (subunit e, at interface between monomers).

It localises to the mitochondrion inner membrane. In terms of biological role, mitochondrial membrane ATP synthase (F(1)F(0) ATP synthase or Complex V) produces ATP from ADP in the presence of a proton gradient across the membrane which is generated by electron transport complexes of the respiratory chain. F-type ATP synthases consist of two structural domains, F(1) - containing the extramembraneous catalytic core, and F(0) - containing the membrane proton channel, linked together by a central stalk and a peripheral stalk. During catalysis, ATP synthesis in the catalytic domain of F(1) is coupled via a rotary mechanism of the central stalk subunits to proton translocation. Part of the complex F(0) domain. Minor subunit located with subunit a/ATP6 in the membrane. Together with subunit g/ATP20, probably contributes to membrane curvature at the site of the ATP synthase dimer, ultimately contributing to formation of cristae. The polypeptide is ATP synthase subunit e, mitochondrial (Yarrowia lipolytica (strain CLIB 122 / E 150) (Yeast)).